The chain runs to 604 residues: Prostaglandin G/H synthase 2 (604 aa).

The signal sequence occupies residues 1–17; that stretch reads MLARALLLCAAVALSHA. The 38-residue stretch at 18–55 folds into the EGF-like domain; sequence ANPCCSNPCQNRGVCMTMGFDQYKCDCTRTGFYGENCS. Disulfide bonds link cysteine 21-cysteine 32, cysteine 22-cysteine 145, cysteine 26-cysteine 42, and cysteine 44-cysteine 54. Asparagine 53 is a glycosylation site (N-linked (GlcNAc...) asparagine). Arginine 106 contributes to the substrate binding site. The N-linked (GlcNAc...) asparagine glycan is linked to asparagine 130. Histidine 193 functions as the Proton acceptor in the catalytic mechanism. Tyrosine 341 serves as a coordination point for substrate. Catalysis depends on tyrosine 371, which acts as the For cyclooxygenase activity. Heme b is bound at residue histidine 374. An N-linked (GlcNAc...) asparagine glycan is attached at asparagine 396. Residue cysteine 526 is modified to S-nitrosocysteine. Residues cysteine 555 and cysteine 561 are joined by a disulfide bond. At serine 565 the chain carries O-acetylserine. N-linked (GlcNAc...) asparagine glycosylation occurs at asparagine 580.

It belongs to the prostaglandin G/H synthase family. In terms of assembly, homodimer. Requires heme b as cofactor. In terms of processing, S-nitrosylation by NOS2 (iNOS) activates enzyme activity. S-nitrosylation may take place on different Cys residues in addition to Cys-526. Post-translationally, acetylated at Ser-565 by SPHK1. During neuroinflammation, acetylation by SPHK1 promotes neuronal secretion of specialized preresolving mediators (SPMs), especially 15-R-lipoxin A4, which results in an increase of phagocytic microglia. Highest expression in kidney and urinary bladder.

It is found in the microsome membrane. Its subcellular location is the endoplasmic reticulum membrane. The protein localises to the nucleus inner membrane. It localises to the nucleus outer membrane. It catalyses the reaction (5Z,8Z,11Z,14Z)-eicosatetraenoate + AH2 + 2 O2 = prostaglandin H2 + A + H2O. The catalysed reaction is (5Z,8Z,11Z,14Z)-eicosatetraenoate + 2 O2 = prostaglandin G2. It carries out the reaction prostaglandin G2 + AH2 = prostaglandin H2 + A + H2O. The enzyme catalyses (5Z,8Z,11Z,14Z,17Z)-eicosapentaenoate + 2 O2 = prostaglandin G3. It catalyses the reaction prostaglandin G3 + AH2 = prostaglandin H3 + A + H2O. The catalysed reaction is (8Z,11Z,14Z)-eicosatrienoate + 2 O2 = prostaglandin G1. It carries out the reaction prostaglandin G1 + AH2 = prostaglandin H1 + A + H2O. The enzyme catalyses 2-(5Z,8Z,11Z,14Z)-eicosatetraenoyl-sn-glycero-3-phosphoethanolamine + 2 O2 = 2-(prostaglandin G2)-sn-glycero-3-phosphoethanolamine. It catalyses the reaction 2-(prostaglandin G2)-sn-glycero-3-phosphoethanolamine + AH2 = 2-(prostaglandin H2)-sn-glycero-3-phosphoethanolamine + A + H2O. The catalysed reaction is 2-(5Z,8Z,11Z,14Z)-eicosatetraenoyl-sn-glycero-3-phosphocholine + 2 O2 = 2-(prostaglandin G2)-sn-glycero-3-phosphocholine. It carries out the reaction 2-(prostaglandin G2)-sn-glycero-3-phosphocholine + AH2 = 2-(prostaglandin H2)-sn-glycero-3-phosphocholine + A + H2O. The enzyme catalyses (15S)-hydroperoxy-(5Z,8Z,11Z,13E)-eicosatetraenoate + AH2 = (15S)-hydroxy-(5Z,8Z,11Z,13E)-eicosatetraenoate + A + H2O. It catalyses the reaction 2-(5Z,8Z,11Z,14Z)-eicosatetraenoyl-sn-glycero-3-phosphocholine + AH2 + O2 = 2-[(15S)-hydroxy-(5Z,8Z,11Z,13E)-eicosatetraenoyl]-sn-glycero-3-phosphocholine + A + H2O. The catalysed reaction is 2-(5Z,8Z,11Z,14Z)-eicosatetraenoyl-sn-glycero-3-phosphocholine + AH2 + O2 = 2-[(15R)-hydroxy-(5Z,8Z,11Z,13E)-eicosatetraenoyl]-sn-glycero-3-phosphocholine + A + H2O. It carries out the reaction 2-(5Z,8Z,11Z,14Z)-eicosatetraenoyl-sn-glycero-3-phosphocholine + AH2 + O2 = 2-[(11R)-hydroxy-(5Z,8Z,12E,14Z)-eicosatetraenoyl]-sn-glycero-3-phosphocholine + A + H2O. The enzyme catalyses (9Z,12Z)-octadecadienoate + AH2 + O2 = 9-hydroxy-(10E,12Z)-octadecadienoate + A + H2O. It catalyses the reaction (9Z,12Z)-octadecadienoate + AH2 + O2 = 13-hydroxy-(9Z,11E)-octadecadienoate + A + H2O. The catalysed reaction is (5Z,8Z,11Z,14Z)-eicosatetraenoate + AH2 + O2 = (15R)-hydroxy-(5Z,8Z,11Z,13E)-eicosatetraenoate + A + H2O. It carries out the reaction (5Z,8Z,11Z,14Z)-eicosatetraenoate + AH2 + O2 = (11R)-hydroxy-(5Z,8Z,12E,14Z)-eicosatetraenoate + A + H2O. The enzyme catalyses (5Z,8Z,11Z,14Z,17Z)-eicosapentaenoate + AH2 + O2 = (11R)-hydroxy-(5Z,8Z,12E,14Z,17Z)-eicosapentaenoate + A + H2O. It catalyses the reaction (5Z,8Z,11Z,14Z,17Z)-eicosapentaenoate + AH2 + O2 = (18S)-hydroxy-(5Z,8Z,11Z,14Z,16E)-eicosapentaenoate + A + H2O. The catalysed reaction is (5Z,8Z,11Z,14Z,17Z)-eicosapentaenoate + AH2 + O2 = (18R)-hydroxy-(5Z,8Z,11Z,14Z,16E)-eicosapentaenoate + A + H2O. It carries out the reaction (5Z,8Z,11Z,14Z,17Z)-eicosapentaenoate + AH2 + O2 = (15R)-hydroxy-(5Z,8Z,11Z,13E,17Z)-eicosapentaenoate + A + H2O. The enzyme catalyses (5Z,8Z,11Z,14Z,17Z)-eicosapentaenoate + AH2 + O2 = (15S)-hydroxy-(5Z,8Z,11Z,13E,17Z)-eicosapentaenoate + A + H2O. It catalyses the reaction (7Z,10Z,13Z,16Z,19Z)-docosapentaenoate + AH2 + O2 = 13R-hydroxy-(7Z,10Z,14E,16Z,19Z)-docosapentaenoate + A + H2O. The catalysed reaction is (4Z,7Z,10Z,13Z,16Z,19Z)-docosahexaenoate + AH2 + O2 = 13-hydroxy-(4Z,7Z,10Z,14E,16Z,19Z)-docosahexaenoate + A + H2O. It carries out the reaction (5S)-hydroxy-(6E,8Z,11Z,14Z)-eicosatetraenoate + AH2 + O2 = (5S,15R)-dihydroxy-(6E,8Z,11Z,13E)-eicosatetraenoate + A + H2O. The enzyme catalyses (4Z,7Z,10Z,13Z,16Z,19Z)-docosahexaenoate + AH2 + O2 = 17R-hydroxy-(4Z,7Z,10Z,13Z,15E,19Z)-docosahexaenoate + A + H2O. It catalyses the reaction (5S)-hydroxy-(6E,8Z,11Z,14Z)-eicosatetraenoate + AH2 + O2 = (5S,15S)-dihydroxy-(6E,8Z,11Z,13E)-eicosatetraenoate + A + H2O. The catalysed reaction is (5S)-hydroxy-(6E,8Z,11Z,14Z)-eicosatetraenoate + AH2 + O2 = (5S,11R)-dihydroxy-(6E,8Z,12E,14Z)-eicosatetraenoate + A + H2O. It carries out the reaction 2-(5Z,8Z,11Z,14Z-eicosatetraenoyl)-glycerol + 2 O2 = 2-glyceryl-prostaglandin G2. The enzyme catalyses 2-glyceryl-prostaglandin G2 + AH2 = 2-glyceryl-prostaglandin H2 + A + H2O. It catalyses the reaction (5Z,8Z,11Z,14Z)-eicosatetraenoate + O2 = (15R)-hydroperoxy-(5Z,8Z,11Z,13E)-eicosatetraenoate. The catalysed reaction is (5Z,8Z,11Z,14Z)-eicosatetraenoate + O2 = 11R-hydroperoxy-(5Z,8Z,12E,14Z)-eicosatetraenoate. It carries out the reaction (9Z,12Z)-octadecadienoate + AH2 + O2 = (9R)-hydroxy-(10E,12Z)-octadecadienoate + A + H2O. The enzyme catalyses (9Z,12Z)-octadecadienoate + AH2 + O2 = (9S)-hydroxy-(10E,12Z)-octadecadienoate + A + H2O. It catalyses the reaction (9Z,12Z)-octadecadienoate + AH2 + O2 = (13S)-hydroxy-(9Z,11E)-octadecadienoate + A + H2O. The catalysed reaction is (9Z,12Z)-octadecadienoate + AH2 + O2 = (13R)-hydroxy-(9Z,11E)-octadecadienoate + A + H2O. It functions in the pathway lipid metabolism; prostaglandin biosynthesis. Dual cyclooxygenase and peroxidase in the biosynthesis pathway of prostanoids, a class of C20 oxylipins mainly derived from arachidonate ((5Z,8Z,11Z,14Z)-eicosatetraenoate, AA, C20:4(n-6)), with a particular role in the inflammatory response. The cyclooxygenase activity oxygenates AA to the hydroperoxy endoperoxide prostaglandin G2 (PGG2), and the peroxidase activity reduces PGG2 to the hydroxy endoperoxide prostaglandin H2 (PGH2), the precursor of all 2-series prostaglandins and thromboxanes. This complex transformation is initiated by abstraction of hydrogen at carbon 13 (with S-stereochemistry), followed by insertion of molecular O2 to form the endoperoxide bridge between carbon 9 and 11 that defines prostaglandins. The insertion of a second molecule of O2 (bis-oxygenase activity) yields a hydroperoxy group in PGG2 that is then reduced to PGH2 by two electrons. Similarly catalyzes successive cyclooxygenation and peroxidation of dihomo-gamma-linoleate (DGLA, C20:3(n-6)) and eicosapentaenoate (EPA, C20:5(n-3)) to corresponding PGH1 and PGH3, the precursors of 1- and 3-series prostaglandins. In an alternative pathway of prostanoid biosynthesis, converts 2-arachidonoyl lysophopholipids to prostanoid lysophopholipids, which are then hydrolyzed by intracellular phospholipases to release free prostanoids. Metabolizes 2-arachidonoyl glycerol yielding the glyceryl ester of PGH2, a process that can contribute to pain response. Generates lipid mediators from n-3 and n-6 polyunsaturated fatty acids (PUFAs) via a lipoxygenase-type mechanism. Oxygenates PUFAs to hydroperoxy compounds and then reduces them to corresponding alcohols. Plays a role in the generation of resolution phase interaction products (resolvins) during both sterile and infectious inflammation. Metabolizes docosahexaenoate (DHA, C22:6(n-3)) to 17R-HDHA, a precursor of the D-series resolvins (RvDs). As a component of the biosynthetic pathway of E-series resolvins (RvEs), converts eicosapentaenoate (EPA, C20:5(n-3)) primarily to 18S-HEPE that is further metabolized by ALOX5 and LTA4H to generate 18S-RvE1 and 18S-RvE2. In vascular endothelial cells, converts docosapentaenoate (DPA, C22:5(n-3)) to 13R-HDPA, a precursor for 13-series resolvins (RvTs) shown to activate macrophage phagocytosis during bacterial infection. In activated leukocytes, contributes to oxygenation of hydroxyeicosatetraenoates (HETE) to diHETES (5,15-diHETE and 5,11-diHETE). Can also use linoleate (LA, (9Z,12Z)-octadecadienoate, C18:2(n-6)) as substrate and produce hydroxyoctadecadienoates (HODEs) in a regio- and stereospecific manner,being (9R)-HODE ((9R)-hydroxy-(10E,12Z)-octadecadienoate) and (13S)-HODE ((13S)-hydroxy-(9Z,11E)-octadecadienoate) its major products. During neuroinflammation, plays a role in neuronal secretion of specialized preresolving mediators (SPMs) 15R-lipoxin A4 that regulates phagocytic microglia. This is Prostaglandin G/H synthase 2 (PTGS2) from Oryctolagus cuniculus (Rabbit).